We begin with the raw amino-acid sequence, 408 residues long: UDP-N-acetylglucosamine--dolichyl-phosphate N-acetylglucosaminephosphotransferase (408 aa).

The Lumenal portion of the chain corresponds to 1 to 10 (MWAFPELPLP). A helical membrane pass occupies residues 11 to 38 (LLVNLFGSLLGFVATVTLIPAFRSHFIA). Over 39–58 (ARLCGQDLNKLSRQQIPESQ) the chain is Cytoplasmic. UDP-N-acetyl-alpha-D-glucosamine is bound by residues 44–46 (QDL) and Glu-56. The chain crosses the membrane as a helical span at residues 59–78 (GVICGAVFLIILFCFIPFPF). The Lumenal segment spans residues 79 to 91 (LNCFVEEQCKAFP). The helical transmembrane segment at 92–118 (HHEFVALIGALLAICCMIFLGFADDVL) threads the bilayer. Over 119 to 121 (NLP) the chain is Cytoplasmic. The helical transmembrane segment at 122-143 (WRHKLLLPTAASLPLLMVYFTN) threads the bilayer. A dolichyl phosphate-binding site is contributed by Lys-125. Residues 144-166 (FGNTTIVVPKPFRWILGLHLDLG) are Lumenal-facing. N-linked (GlcNAc...) asparagine glycosylation is present at Asn-146. The chain crosses the membrane as a helical span at residues 167–186 (ILYYVYMGLLAVFCTNAINI). 178–186 (VFCTNAINI) is a binding site for dolichyl phosphate. Asn-185 provides a ligand contact to Mg(2+). The Cytoplasmic segment spans residues 187-192 (LAGING). Residue Asn-191 coordinates UDP-N-acetyl-alpha-D-glucosamine. A helical transmembrane segment spans residues 193–213 (LEAGQSLVISASIIVFNLVEL). Residues 214-218 (EGDYR) are Lumenal-facing. A helical membrane pass occupies residues 219–242 (DDHVFSLYFMIPFFFTTLGLLYHN). Topologically, residues 243–250 (WYPSQVFV) are cytoplasmic. The helical transmembrane segment at 251 to 269 (GDTFCYFAGMTFAVVGILG) threads the bilayer. Asp-252 is a binding site for Mg(2+). Topologically, residues 270-271 (HF) are lumenal. The helical transmembrane segment at 272 to 293 (SKTMLLFFIPQVFNFLYSLPQL) threads the bilayer. The Cytoplasmic portion of the chain corresponds to 294–375 (LHAIPCPRHR…LLLKIFGPIH (82 aa)). Position 301–303 (301–303 (RHR)) interacts with UDP-N-acetyl-alpha-D-glucosamine. The helical transmembrane segment at 376 to 400 (ERNLTLLLLLLQILSSAVTFSIRYQ) threads the bilayer. At 401–408 (LVRLFYDV) the chain is on the lumenal side.

The protein belongs to the glycosyltransferase 4 family. As to quaternary structure, homodimer. Mg(2+) serves as cofactor.

It localises to the endoplasmic reticulum membrane. It catalyses the reaction a di-trans,poly-cis-dolichyl phosphate + UDP-N-acetyl-alpha-D-glucosamine = an N-acetyl-alpha-D-glucosaminyl-diphospho-di-trans,poly-cis-dolichol + UMP. It participates in protein modification; protein glycosylation. Its activity is regulated as follows. Inhibited by natural nucleoside antibiotic tunicamycin, which acts as a structural analog and competitor of UDP-GlcNAc. In terms of biological role, UDP-N-acetylglucosamine--dolichyl-phosphate N-acetylglucosaminephosphotransferase that operates in the biosynthetic pathway of dolichol-linked oligosaccharides, the glycan precursors employed in protein asparagine (N)-glycosylation. The assembly of dolichol-linked oligosaccharides begins on the cytosolic side of the endoplasmic reticulum membrane and finishes in its lumen. The sequential addition of sugars to dolichol pyrophosphate produces dolichol-linked oligosaccharides containing fourteen sugars, including two GlcNAcs, nine mannoses and three glucoses. Once assembled, the oligosaccharide is transferred from the lipid to nascent proteins by oligosaccharyltransferases. Catalyzes the initial step of dolichol-linked oligosaccharide biosynthesis, transfering GlcNAc-1-P from cytosolic UDP-GlcNAc onto the carrier lipid dolichyl phosphate (P-dolichol), yielding GlcNAc-P-P-dolichol embedded in the cytoplasmic leaflet of the endoplasmic reticulum membrane. The polypeptide is UDP-N-acetylglucosamine--dolichyl-phosphate N-acetylglucosaminephosphotransferase (DPAGT1) (Cricetulus longicaudatus (Long-tailed dwarf hamster)).